A 417-amino-acid chain; its full sequence is Serine hydroxymethyltransferase (417 aa).

(6S)-5,6,7,8-tetrahydrofolate contacts are provided by residues leucine 121 and 125–127 (GHL). Residue lysine 229 is modified to N6-(pyridoxal phosphate)lysine. Residue 355–357 (SPF) participates in (6S)-5,6,7,8-tetrahydrofolate binding.

It belongs to the SHMT family. Homodimer. It depends on pyridoxal 5'-phosphate as a cofactor.

It localises to the cytoplasm. It carries out the reaction (6R)-5,10-methylene-5,6,7,8-tetrahydrofolate + glycine + H2O = (6S)-5,6,7,8-tetrahydrofolate + L-serine. It functions in the pathway one-carbon metabolism; tetrahydrofolate interconversion. It participates in amino-acid biosynthesis; glycine biosynthesis; glycine from L-serine: step 1/1. Catalyzes the reversible interconversion of serine and glycine with tetrahydrofolate (THF) serving as the one-carbon carrier. This reaction serves as the major source of one-carbon groups required for the biosynthesis of purines, thymidylate, methionine, and other important biomolecules. Also exhibits THF-independent aldolase activity toward beta-hydroxyamino acids, producing glycine and aldehydes, via a retro-aldol mechanism. The polypeptide is Serine hydroxymethyltransferase (Shewanella oneidensis (strain ATCC 700550 / JCM 31522 / CIP 106686 / LMG 19005 / NCIMB 14063 / MR-1)).